Consider the following 1954-residue polypeptide: Integrin beta-like protein C (1954 aa).

An N-terminal signal peptide occupies residues Met1–Ala20. At Ser21 to Thr1883 the chain is on the extracellular side. Asn138 and Asn354 each carry an N-linked (GlcNAc...) asparagine glycan. Residues Tyr428 to Ser465 form the EGF-like domain. Disulfide bonds link Cys438-Cys453 and Cys455-Cys464. Residue Asn479 is glycosylated (N-linked (GlcNAc...) asparagine). Residues Asp521 to Ile706 enclose the VWFA domain. Residues Asn1348, Asn1382, Asn1628, Asn1678, Asn1742, Asn1770, Asn1820, Asn1860, and Asn1881 are each glycosylated (N-linked (GlcNAc...) asparagine). Residues Val1884–Trp1904 form a helical membrane-spanning segment. Topologically, residues Arg1905–Asp1954 are cytoplasmic.

Belongs to the SIB family. As to quaternary structure, interacts with talA/talin.

It is found in the membrane. In terms of biological role, implicated in cellular adhesion. This chain is Integrin beta-like protein C (sibC), found in Dictyostelium discoideum (Social amoeba).